The sequence spans 109 residues: UPF0060 membrane protein ABO_1373 (109 aa).

A run of 4 helical transmembrane segments spans residues 1-21, 33-53, 63-83, and 87-107; these read MLAL…IVGC, PGWV…LLSL, AAYG…VEGV, and PWDF…MFAP.

Belongs to the UPF0060 family.

It is found in the cell inner membrane. This chain is UPF0060 membrane protein ABO_1373, found in Alcanivorax borkumensis (strain ATCC 700651 / DSM 11573 / NCIMB 13689 / SK2).